We begin with the raw amino-acid sequence, 37 residues long: Large ribosomal subunit protein bL36c (37 aa).

This sequence belongs to the bacterial ribosomal protein bL36 family.

The protein resides in the plastid. The protein localises to the chloroplast. The chain is Large ribosomal subunit protein bL36c (rpl36) from Chlorella vulgaris (Green alga).